Reading from the N-terminus, the 155-residue chain is Secreted RxLR effector protein RXLR-C301 (155 aa).

An N-terminal signal peptide occupies residues Met-1–Ala-24. The RxLR-dEER motif lies at Arg-34–Arg-64.

This sequence belongs to the RxLR effector family.

Its subcellular location is the secreted. It is found in the host cell membrane. In terms of biological role, secreted effector that does not suppress pattern-triggered immunity (PTI) in plant host. The polypeptide is Secreted RxLR effector protein RXLR-C301 (Plasmopara halstedii (Downy mildew of sunflower)).